Reading from the N-terminus, the 172-residue chain is ATP synthase subunit b (172 aa).

Residues 13 to 33 (GINGGDILFQLVMFLILLALL) traverse the membrane as a helical segment.

This sequence belongs to the ATPase B chain family. In terms of assembly, F-type ATPases have 2 components, F(1) - the catalytic core - and F(0) - the membrane proton channel. F(1) has five subunits: alpha(3), beta(3), gamma(1), delta(1), epsilon(1). F(0) has three main subunits: a(1), b(2) and c(10-14). The alpha and beta chains form an alternating ring which encloses part of the gamma chain. F(1) is attached to F(0) by a central stalk formed by the gamma and epsilon chains, while a peripheral stalk is formed by the delta and b chains.

The protein resides in the cell membrane. Functionally, f(1)F(0) ATP synthase produces ATP from ADP in the presence of a proton or sodium gradient. F-type ATPases consist of two structural domains, F(1) containing the extramembraneous catalytic core and F(0) containing the membrane proton channel, linked together by a central stalk and a peripheral stalk. During catalysis, ATP synthesis in the catalytic domain of F(1) is coupled via a rotary mechanism of the central stalk subunits to proton translocation. Its function is as follows. Component of the F(0) channel, it forms part of the peripheral stalk, linking F(1) to F(0). The chain is ATP synthase subunit b from Priestia megaterium (strain ATCC 12872 / QMB1551) (Bacillus megaterium).